Reading from the N-terminus, the 314-residue chain is MADQAMTDQDQGAVTLYSGTAITDAKKNHPFSVKVGLAQVLRGGAIVEVSSVNQAKLAESAGACSVIVSDPVRSRGGVRRMPDPVLIKEVKRAVSVPVMARARVGHFVEAQILESLAVDYIDESEIISVADDDHFINKHNFRSPFICGCRDTGEALRRIREGAAMIRIQGDLTATGNIAETVKNVRSLMGEVRVLNNMDDDEVFTFAKKISAPYDLVAQTKQMGRVPVVQFASGGITTPADAALMMQLGCDGVFVGSEVFDGPDPFKKLRSIVQAVQHYNDPHVLAEMSSGLENAMESLNVRGDRIQDFGQGSV.

A2 is subject to N-acetylalanine.

This sequence belongs to the PdxS/SNZ family. As to quaternary structure, homodimer or heterodimer with PDX1.1 or PDX1.3. No interaction with PDX2. In terms of tissue distribution, expressed in callus tissues, flowers and roots. Weakly expressed in leaves and stems.

Its subcellular location is the cytoplasm. In terms of biological role, the protein has no function in the formation of pyridoxal 5'-phosphate. This Arabidopsis thaliana (Mouse-ear cress) protein is Pyridoxal 5'-phosphate synthase-like subunit PDX1.2 (PDX12).